A 958-amino-acid polypeptide reads, in one-letter code: Eukaryotic translation initiation factor 3 subunit A (958 aa).

Positions M93 to K123 form a coiled coil. Residues L316–L513 form the PCI domain. Coiled-coil stretches lie at residues E548–E696 and L796–S861. The span at K804–R859 shows a compositional bias: basic and acidic residues. Positions K804–R958 are disordered. Positions P877–P894 are enriched in low complexity. The segment covering K929–P942 has biased composition (basic and acidic residues). The span at G946–R958 shows a compositional bias: polar residues.

This sequence belongs to the eIF-3 subunit A family. As to quaternary structure, component of the eukaryotic translation initiation factor 3 (eIF-3) complex.

The protein resides in the cytoplasm. Its function is as follows. RNA-binding component of the eukaryotic translation initiation factor 3 (eIF-3) complex, which is involved in protein synthesis of a specialized repertoire of mRNAs and, together with other initiation factors, stimulates binding of mRNA and methionyl-tRNAi to the 40S ribosome. The eIF-3 complex specifically targets and initiates translation of a subset of mRNAs involved in cell proliferation. The polypeptide is Eukaryotic translation initiation factor 3 subunit A (TIF3A1) (Nicotiana tabacum (Common tobacco)).